The chain runs to 820 residues: Leucine--tRNA ligase (820 aa).

Residues 42-52 (PYPSGDLHMGH) carry the 'HIGH' region motif. A 'KMSKS' region motif is present at residues 576-580 (KMSKS). Lys579 lines the ATP pocket.

Belongs to the class-I aminoacyl-tRNA synthetase family.

The protein localises to the cytoplasm. It catalyses the reaction tRNA(Leu) + L-leucine + ATP = L-leucyl-tRNA(Leu) + AMP + diphosphate. This Coxiella burnetii (strain RSA 331 / Henzerling II) protein is Leucine--tRNA ligase.